Reading from the N-terminus, the 308-residue chain is Acetyl-coenzyme A carboxylase carboxyl transferase subunit alpha (308 aa).

Residues 36 to 286 (ELEKEVSSVY…ESYFLKAFEE (251 aa)) enclose the CoA carboxyltransferase C-terminal domain.

This sequence belongs to the AccA family. As to quaternary structure, acetyl-CoA carboxylase is a heterohexamer composed of biotin carboxyl carrier protein (AccB), biotin carboxylase (AccC) and two subunits each of ACCase subunit alpha (AccA) and ACCase subunit beta (AccD).

The protein localises to the cytoplasm. The catalysed reaction is N(6)-carboxybiotinyl-L-lysyl-[protein] + acetyl-CoA = N(6)-biotinyl-L-lysyl-[protein] + malonyl-CoA. Its pathway is lipid metabolism; malonyl-CoA biosynthesis; malonyl-CoA from acetyl-CoA: step 1/1. Component of the acetyl coenzyme A carboxylase (ACC) complex. First, biotin carboxylase catalyzes the carboxylation of biotin on its carrier protein (BCCP) and then the CO(2) group is transferred by the carboxyltransferase to acetyl-CoA to form malonyl-CoA. In Helicobacter hepaticus (strain ATCC 51449 / 3B1), this protein is Acetyl-coenzyme A carboxylase carboxyl transferase subunit alpha.